The sequence spans 207 residues: NADH-quinone oxidoreductase subunit A (207 aa).

The next 3 membrane-spanning stretches (helical) occupy residues tryptophan 6 to proline 26, leucine 62 to valine 82, and alanine 87 to valine 107.

It belongs to the complex I subunit 3 family. As to quaternary structure, NDH-1 is composed of 14 different subunits. Subunits NuoA, H, J, K, L, M, N constitute the membrane sector of the complex.

It is found in the cell inner membrane. It catalyses the reaction a quinone + NADH + 5 H(+)(in) = a quinol + NAD(+) + 4 H(+)(out). NDH-1 shuttles electrons from NADH, via FMN and iron-sulfur (Fe-S) centers, to quinones in the respiratory chain. The immediate electron acceptor for the enzyme in this species is believed to be ubiquinone. Couples the redox reaction to proton translocation (for every two electrons transferred, four hydrogen ions are translocated across the cytoplasmic membrane), and thus conserves the redox energy in a proton gradient. The sequence is that of NADH-quinone oxidoreductase subunit A from Psychrobacter arcticus (strain DSM 17307 / VKM B-2377 / 273-4).